The chain runs to 287 residues: tRNA pseudouridine synthase B (287 aa).

The active-site Nucleophile is D37.

This sequence belongs to the pseudouridine synthase TruB family. Type 1 subfamily.

It catalyses the reaction uridine(55) in tRNA = pseudouridine(55) in tRNA. Its function is as follows. Responsible for synthesis of pseudouridine from uracil-55 in the psi GC loop of transfer RNAs. The protein is tRNA pseudouridine synthase B of Caldicellulosiruptor saccharolyticus (strain ATCC 43494 / DSM 8903 / Tp8T 6331).